The sequence spans 350 residues: Trans-enoyl reductase iliB (350 aa).

50-53 is a binding site for NADP(+); the sequence is VDGK. Residue 145 to 152 participates in substrate binding; that stretch reads AAIATVGL. NADP(+) contacts are provided by residues 177–180, Tyr195, and 242–243; these read SAAS and LD. 262-266 contacts substrate; that stretch reads TPTQF. NADP(+) is bound at residue 331–332; sequence IK.

Belongs to the zinc-containing alcohol dehydrogenase family. Monomer.

The catalysed reaction is N-[(4E,6E,10S,12Z,14E)-6,10-dimethyl-3-oxohexadeca-4,6,12,14-tetraenoyl]-L-tyrosyl-[ACP] = (3E,5S)-3-[(2E,4E,8S,10E,12Z)-1-hydroxy-4,8-dimethyltetradeca-2,4,10,12-tetraen-1-ylidene]-5-[(4-hydroxyphenyl)methyl]pyrrolidine-2,4-dione + holo-[ACP] + H(+). It participates in mycotoxin biosynthesis. Its function is as follows. Trans-enoyl reductase; part of the gene cluster that mediates the biosynthesis of ilicicolin H, a 4-hydroxy-2-pyridonealkaloid that has potent and broad antifungal activities by inhibiting the mitochondrial respiration chain. IliB collaborates with the hybrid PKS-NRPS synthetase iliA to assemble the backbone of ilicicolin H. The PKS portion of iliA and trans-acting enoyl reductase iliB work together to construct an octaketide, and two methyl groups are introduced by the MT domain of iliA during the chain assembly. The nascent chain is then condensed with tyrosine, catalyzed by the iliA C domain, and the resulting PKS-NRPS hybrid is offloaded by the iliA RED domain to form an advanced tetramic acid intermediate. The biosynthesis of ilicicolin H starts with formation of the tetramic acid by the hybrid PKS-NRPS synthetase iliA with the partnering trans-enoyl reductase iliB since iliA lacks a designated enoylreductase (ER) domain. The cytochrome P450 monooxygenase iliC then catalyzes the ring expansion of the tetramate to the acyclic 2-pyridone. The pericyclase iliD further converts the acyclic 2-pyridone into 8-epi-ilicicolin H. 8-epi-ilicicolin H might then spontaneously convert to ilicicolin H since ilicicolin H is produced in the absence of the epimerase iliE, in contrast to what was observed for the Talaromyces variabilis ilicolin H biosynthetic pathway. This chain is Trans-enoyl reductase iliB, found in Hypocrea jecorina (strain QM6a) (Trichoderma reesei).